We begin with the raw amino-acid sequence, 410 residues long: MKKVTVDDFSSPENMHDVIGFYKKLTEHQEPLIRLDDYYGLGPAWVALRHDDVVTILKNPRFLKDVRKFTPLQDKKDSIDDSTSASKLFEWMMNMPNMLTVDPPDHTRLRRLASKAFTPRMIENLRPRIQQITNELLDSVEGKRNMDLVADFSFPLPIIVISEMLGIPPLDQKRFRDWTDKLIKAAMDPSQGAVVMETLKEFIDYIKKMLVEKRNHPDDDVMSALLQAHEQEDKLSENELLSTIWLLITAGHETTAHLISNGVLALLKHPEQMRLLRDNPSLLPSAVEELLRYAGPVMIGGRFAGEDIIMHGKMIPKGEMVLFSLVAANIDSQKFSYPEGLDITREENEHLTFGKGIHHCLGAPLARMEAHIAFGTLLQRFPDLRLAIESEQLVYNNSTLRSLKSLPVIF.

Heme contacts are provided by histidine 106 and arginine 110. Substrate-binding residues include threonine 249 and glutamate 253. Positions 302, 358, and 360 each coordinate heme.

This sequence belongs to the cytochrome P450 family. Heme is required as a cofactor.

It catalyses the reaction mevastatin + 2 reduced [2Fe-2S]-[ferredoxin] + O2 + 2 H(+) = pravastatin lactone + 2 oxidized [2Fe-2S]-[ferredoxin] + H2O. Functionally, cytochrome P450 whose physiological substrate is unknown. In vitro, is able to catalyze the selective hydroxylation of mevastatin to pravastatin, the widely used therapeutic agent for hypercholesterolemia. The protein is Cytochrome P450 CYP107DY1 of Priestia megaterium (strain ATCC 12872 / QMB1551) (Bacillus megaterium).